The primary structure comprises 820 residues: DNA gyrase subunit A (820 aa).

The Topo IIA-type catalytic domain maps to 31–496; sequence IPDVRDGLKP…TLTNIEIEDL (466 aa). Tyr119 serves as the catalytic O-(5'-phospho-DNA)-tyrosine intermediate. The GyrA-box motif lies at 523–529; sequence QRRGGKG.

It belongs to the type II topoisomerase GyrA/ParC subunit family. Heterotetramer, composed of two GyrA and two GyrB chains. In the heterotetramer, GyrA contains the active site tyrosine that forms a transient covalent intermediate with DNA, while GyrB binds cofactors and catalyzes ATP hydrolysis.

It localises to the cytoplasm. It carries out the reaction ATP-dependent breakage, passage and rejoining of double-stranded DNA.. In terms of biological role, a type II topoisomerase that negatively supercoils closed circular double-stranded (ds) DNA in an ATP-dependent manner to modulate DNA topology and maintain chromosomes in an underwound state. Negative supercoiling favors strand separation, and DNA replication, transcription, recombination and repair, all of which involve strand separation. Also able to catalyze the interconversion of other topological isomers of dsDNA rings, including catenanes and knotted rings. Type II topoisomerases break and join 2 DNA strands simultaneously in an ATP-dependent manner. This is DNA gyrase subunit A from Lawsonia intracellularis (strain PHE/MN1-00).